We begin with the raw amino-acid sequence, 204 residues long: Holliday junction branch migration complex subunit RuvA (204 aa).

Residues 1-67 (MIAFLSGHLV…ETELVLYGFG (67 aa)) form a domain I region. Positions 68 to 146 (SPAERDVFVE…HWRQGLENAD (79 aa)) are domain II. Positions 147 to 156 (RPLAGGPPPA) are flexible linker. Residues 156–204 (AIREEVEMALLALGYSLQEIQAALQALPSQPRPTEEWLRDAITYLSRQP) form a domain III region.

The protein belongs to the RuvA family. In terms of assembly, homotetramer. Forms an RuvA(8)-RuvB(12)-Holliday junction (HJ) complex. HJ DNA is sandwiched between 2 RuvA tetramers; dsDNA enters through RuvA and exits via RuvB. An RuvB hexamer assembles on each DNA strand where it exits the tetramer. Each RuvB hexamer is contacted by two RuvA subunits (via domain III) on 2 adjacent RuvB subunits; this complex drives branch migration. In the full resolvosome a probable DNA-RuvA(4)-RuvB(12)-RuvC(2) complex forms which resolves the HJ.

It localises to the cytoplasm. Its function is as follows. The RuvA-RuvB-RuvC complex processes Holliday junction (HJ) DNA during genetic recombination and DNA repair, while the RuvA-RuvB complex plays an important role in the rescue of blocked DNA replication forks via replication fork reversal (RFR). RuvA specifically binds to HJ cruciform DNA, conferring on it an open structure. The RuvB hexamer acts as an ATP-dependent pump, pulling dsDNA into and through the RuvAB complex. HJ branch migration allows RuvC to scan DNA until it finds its consensus sequence, where it cleaves and resolves the cruciform DNA. This is Holliday junction branch migration complex subunit RuvA from Synechococcus sp. (strain JA-3-3Ab) (Cyanobacteria bacterium Yellowstone A-Prime).